Consider the following 362-residue polypeptide: UDP-galactose transporter homolog 1 (362 aa).

The next 5 membrane-spanning stretches (helical) occupy residues 7–27 (IFPVLFCAAGIYASFLTWALV), 45–65 (CPNVIAVVQAVAAVCVGYFYM), 111–131 (LTYMLAKSCKMIPVLLVHLII), 141–161 (SVVAVLVSIGVTIFTIGGSKG), and 175–195 (FFQKASGFLLLFLSLFMDGLT). An N-linked (GlcNAc...) asparagine glycan is attached at Asn-196. A run of 4 helical transmembrane segments spans residues 234-254 (HMMFALNFFVAIWNIAYLLVI), 271-291 (IIVSYLLAYALCGSLGQCFIF), 296-316 (LYGSLVLIMITVTRKMMSMLL), and 317-337 (SIIVFGKTVNATQWLGIVIVF).

Belongs to the nucleotide-sugar transporter family. SLC35B subfamily.

The protein localises to the endoplasmic reticulum membrane. Its function is as follows. May be involved in specific transport of UDP-Gal from the cytosol to the Golgi lumen. Involved in the maintenance of optimal conditions for the folding of secretory pathway proteins in the endoplasmic reticulum. The protein is UDP-galactose transporter homolog 1 (HUT1) of Candida glabrata (strain ATCC 2001 / BCRC 20586 / JCM 3761 / NBRC 0622 / NRRL Y-65 / CBS 138) (Yeast).